A 249-amino-acid polypeptide reads, in one-letter code: tRNA pseudouridine synthase A (249 aa).

D53 (nucleophile) is an active-site residue. Y111 serves as a coordination point for substrate.

The protein belongs to the tRNA pseudouridine synthase TruA family. Homodimer.

It carries out the reaction uridine(38/39/40) in tRNA = pseudouridine(38/39/40) in tRNA. Formation of pseudouridine at positions 38, 39 and 40 in the anticodon stem and loop of transfer RNAs. This Streptococcus pneumoniae serotype 2 (strain D39 / NCTC 7466) protein is tRNA pseudouridine synthase A.